Here is a 523-residue protein sequence, read N- to C-terminus: DELLA protein RGL3 (523 aa).

A disordered region spans residues 1–28; the sequence is MKRSHQETSVEEEAPSMVEKLENGCGGG. The short motif at 34 to 38 is the DELLA motif element; sequence DEFLA. Residues 56-60 carry the LEXLE motif motif; sequence LEQLE. A VHYNP motif motif is present at residues 78 to 82; the sequence is VHYNP. The 369-residue stretch at 148 to 516 folds into the GRAS domain; sequence VLIEETGVRL…KPLIAASAWK (369 aa). Positions 155–209 are leucine repeat I (LRI); sequence VRLVQALVACAEAVQLENLSLADALVKRVGLLAASQAGAMGKVATYFAEALARRI. The VHIID stretch occupies residues 228-293; sequence QMNFYDSCPY…GGPPSFRLTG (66 aa). Residues 259–263 carry the VHIID motif; that stretch reads VHVID. The tract at residues 305–337 is leucine repeat II (LRII); it reads ELGWKLAQLAQAIGVEFKFNGLTTERLSDLEPD. Residues 348-437 are PFYRE; the sequence is LVVNSVFELH…EVYLGRQILN (90 aa). An LXXLL motif motif is present at residues 356–360; it reads LHPVL. The SAW stretch occupies residues 440–516; sequence ATEGSDRIER…KPLIAASAWK (77 aa).

The protein belongs to the GRAS family. DELLA subfamily. In terms of assembly, interacts directly with the GID2/SLY1 component of the SCF(GID2) complex, suggesting that it may be ubiquitinated. Interacts (via N-terminus) with GID1A, GID1B and GID1B (via N-terminus). Interacts with the BOI proteins BOI, BRG1, BRG2 and BRG3. In terms of processing, phosphorylated. Post-translationally, may be ubiquitinated. Expressed at very low level. Mainly expressed in germinating seeds and flowers and siliques. Not expressed in other tissues.

Its subcellular location is the nucleus. In terms of biological role, probable transcriptional regulator that acts as a repressor of the gibberellin (GA) signaling pathway. No effect of the BOI proteins on its stability. Probably acts by participating in large multiprotein complexes that repress transcription of GA-inducible genes. Its activity may be regulated by phytohormones such as auxin and ethylene. This chain is DELLA protein RGL3 (RGL3), found in Arabidopsis thaliana (Mouse-ear cress).